A 372-amino-acid chain; its full sequence is Cobalt-precorrin-5B C(1)-methyltransferase (372 aa).

It belongs to the CbiD family.

It carries out the reaction Co-precorrin-5B + S-adenosyl-L-methionine = Co-precorrin-6A + S-adenosyl-L-homocysteine. It participates in cofactor biosynthesis; adenosylcobalamin biosynthesis; cob(II)yrinate a,c-diamide from sirohydrochlorin (anaerobic route): step 6/10. In terms of biological role, catalyzes the methylation of C-1 in cobalt-precorrin-5B to form cobalt-precorrin-6A. The polypeptide is Cobalt-precorrin-5B C(1)-methyltransferase (Geobacillus kaustophilus (strain HTA426)).